Here is a 187-residue protein sequence, read N- to C-terminus: Elongation factor P (187 aa).

This sequence belongs to the elongation factor P family.

It is found in the cytoplasm. It participates in protein biosynthesis; polypeptide chain elongation. Involved in peptide bond synthesis. Stimulates efficient translation and peptide-bond synthesis on native or reconstituted 70S ribosomes in vitro. Probably functions indirectly by altering the affinity of the ribosome for aminoacyl-tRNA, thus increasing their reactivity as acceptors for peptidyl transferase. This chain is Elongation factor P, found in Rhodococcus erythropolis (strain PR4 / NBRC 100887).